The sequence spans 1553 residues: Pre-mRNA cleavage complex 2 protein Pcf11 (1553 aa).

Residue Ser2 is modified to N-acetylserine. The CID domain occupies 14-142 (AREDACRDYQ…ALDVRVNSLD (129 aa)). A Phosphoserine modification is found at Ser120. A Phosphothreonine modification is found at Thr121. Residues 167 to 186 (NKSPDEPSTPGTVVSSPSIS) form a disordered region. Phosphoserine is present on residues Ser169 and Ser182. The segment covering 174–186 (STPGTVVSSPSIS) has biased composition (low complexity). Residues 208–235 (LLAKQKQLLELQQKKLELELEQAKAQLA) adopt a coiled-coil conformation. The tract at residues 265–648 (AVKTPHQVPV…KQQHRLSVDA (384 aa)) is disordered. Lys291 participates in a covalent cross-link: Glycyl lysine isopeptide (Lys-Gly) (interchain with G-Cter in SUMO2). Over residues 308 to 318 (HGKEQSHRKEF) the composition is skewed to basic and acidic residues. Polar residues predominate over residues 321 to 342 (NTINQSDIKTSKNVPSEKLNSS). Residue Lys329 forms a Glycyl lysine isopeptide (Lys-Gly) (interchain with G-Cter in SUMO2) linkage. 3 stretches are compositionally biased toward basic and acidic residues: residues 343 to 365 (KQEK…DSKS), 381 to 422 (HTKD…DVKE), and 428 to 443 (EKKE…EHRV). Lys457 participates in a covalent cross-link: Glycyl lysine isopeptide (Lys-Gly) (interchain with G-Cter in SUMO2). A compositionally biased stretch (basic residues) spans 476-487 (STRKRSRSRSPK). Residues Ser490, Ser495, Ser510, and Ser512 each carry the phosphoserine modification. The span at 495-509 (SPKRRDRRSPKRRQR) shows a compositional bias: basic residues. Composition is skewed to basic and acidic residues over residues 530–568 (SHME…DRPQ) and 600–616 (SGWE…EHSK). A Phosphoserine modification is found at Ser645. Lys654 is covalently cross-linked (Glycyl lysine isopeptide (Lys-Gly) (interchain with G-Cter in SUMO2)). A Phosphoserine modification is found at Ser705. The tract at residues 707–733 (FNDRFPLKRPRYEDSDKPFVDGPASRF) is disordered. Positions 716-725 (PRYEDSDKPF) are enriched in basic and acidic residues. Residue Lys723 forms a Glycyl lysine isopeptide (Lys-Gly) (interchain with G-Cter in SUMO2) linkage. At Ser777 the chain carries Phosphoserine. Thr785 carries the phosphothreonine modification. A Phosphoserine modification is found at Ser794. Asymmetric dimethylarginine is present on residues Arg805, Arg820, and Arg833. Phosphoserine is present on Ser851. Positions 921-940 (HGPSGAAIRFDGPHGQPGGG) are disordered. An asymmetric dimethylarginine mark is found at Arg929, Arg944, Arg957, Arg982, Arg995, Arg1008, Arg1092, and Arg1103. A Glycyl lysine isopeptide (Lys-Gly) (interchain with G-Cter in SUMO2) cross-link involves residue Lys1276. The segment at 1286–1313 (DSATAQVTEAVAQPPPEEDEDQNEDQDV) is disordered. The span at 1301 to 1313 (PEEDEDQNEDQDV) shows a compositional bias: acidic residues. Residues Lys1417, Lys1509, Lys1522, and Lys1544 each participate in a glycyl lysine isopeptide (Lys-Gly) (interchain with G-Cter in SUMO2) cross-link. The interval 1516-1553 (CESPKVKEEQIDAPPACSEESVATPTEIKTESDTVESV) is disordered.

Associates with the phosphorylated CTD domain of POLR2A /RNA polymerase II. In terms of processing, phosphorylation at Ser-120 and/or Thr-121 by WNK1 weakens its association with POLR2A/RNA polymerase II, promoting transcript release from the chromatin template and mRNA export to the cytoplasm.

Its subcellular location is the nucleus. Its function is as follows. Component of pre-mRNA cleavage complex II, which promotes transcription termination by RNA polymerase II. In Mus musculus (Mouse), this protein is Pre-mRNA cleavage complex 2 protein Pcf11.